We begin with the raw amino-acid sequence, 379 residues long: Alkanesulfonate monooxygenase (379 aa).

Belongs to the SsuD family.

The catalysed reaction is an alkanesulfonate + FMNH2 + O2 = an aldehyde + FMN + sulfite + H2O + 2 H(+). Catalyzes the desulfonation of aliphatic sulfonates. This Sorangium cellulosum (strain So ce56) (Polyangium cellulosum (strain So ce56)) protein is Alkanesulfonate monooxygenase.